Consider the following 217-residue polypeptide: Probable lipoprotein CPn_0875/CP_0994/CPj0875/CpB0904 (217 aa).

Positions 1-21 (MKRVIYKTIFCGLTLLTSLSS) are cleaved as a signal peptide. A lipid anchor (N-palmitoyl cysteine) is attached at Cys22. Residue Cys22 is the site of S-diacylglycerol cysteine attachment.

This sequence belongs to the chlamydial CPn_0875/CT_734/TC_0107 family.

It is found in the cell membrane. The polypeptide is Probable lipoprotein CPn_0875/CP_0994/CPj0875/CpB0904 (Chlamydia pneumoniae (Chlamydophila pneumoniae)).